The sequence spans 465 residues: Gamma-aminobutyric acid receptor subunit alpha-6 (465 aa).

The signal sequence occupies residues 1-19 (MALLIAWVCVAVSIEKALG). The Extracellular segment spans residues 20–243 (GQGDGGDLYS…FHLQRKMGYF (224 aa)). N31 is a glycosylation site (N-linked (GlcNAc...) asparagine). R84 contacts 4-aminobutanoate. 2 N-linked (GlcNAc...) asparagine glycosylation sites follow: N128 and N141. T147 is a 4-aminobutanoate binding site. C156 and C170 are joined by a disulfide. The chain crosses the membrane as a helical span at residues 244-264 (MIQIYTPCIMTVILSQVSFWI). The Cytoplasmic segment spans residues 265–270 (NKESVP). A helical membrane pass occupies residues 271–290 (ARTVFGITTVLTMTTLSISA). At 291–304 (RHSLPKVSYATAMD) the chain is on the extracellular side. The chain crosses the membrane as a helical span at residues 305–325 (WFIAVCFAFVFSALIEFAAVN). At 326–424 (YFTNLQTQRA…GTSKIDQYSR (99 aa)) the chain is on the cytoplasmic side. Positions 392–415 (NSASQCQPVSAPPPAPPAPPPVGG) are disordered. The span at 401–413 (SAPPPAPPAPPPV) shows a compositional bias: pro residues. The chain crosses the membrane as a helical span at residues 425–445 (ILFPVAFAGFNLVYWVVYLSK). Topologically, residues 446-465 (DTMEFFEPTAMHLRNDHQSN) are extracellular.

The protein belongs to the ligand-gated ion channel (TC 1.A.9) family. Gamma-aminobutyric acid receptor (TC 1.A.9.5) subfamily. GABRA6 sub-subfamily. In terms of assembly, heteropentamer, formed by a combination of alpha (GABRA1-6), beta (GABRB1-3), gamma (GABRG1-3), delta (GABRD), epsilon (GABRE), rho (GABRR1-3), pi (GABRP) and theta (GABRQ) chains, each subunit exhibiting distinct physiological and pharmacological properties. As to expression, expressed in brain, in cerebellar granule cells.

Its subcellular location is the postsynaptic cell membrane. It is found in the cell membrane. The catalysed reaction is chloride(in) = chloride(out). Functionally, alpha subunit of the heteropentameric ligand-gated chloride channel gated by gamma-aminobutyric acid (GABA), a major inhibitory neurotransmitter in the brain. GABA-gated chloride channels, also named GABA(A) receptors (GABAAR), consist of five subunits arranged around a central pore and contain GABA active binding site(s) located at the alpha and beta subunit interface(s). When activated by GABA, GABAARs selectively allow the flow of chloride anions across the cell membrane down their electrochemical gradient. This Gallus gallus (Chicken) protein is Gamma-aminobutyric acid receptor subunit alpha-6 (GABRA6).